The chain runs to 352 residues: Chorismate synthase (352 aa).

Residues arginine 48 and arginine 54 each coordinate NADP(+). Residues 125 to 127 (RSS), 238 to 239 (NA), glycine 278, 293 to 297 (KPTSS), and arginine 319 contribute to the FMN site.

This sequence belongs to the chorismate synthase family. Homotetramer. It depends on FMNH2 as a cofactor.

It catalyses the reaction 5-O-(1-carboxyvinyl)-3-phosphoshikimate = chorismate + phosphate. Its pathway is metabolic intermediate biosynthesis; chorismate biosynthesis; chorismate from D-erythrose 4-phosphate and phosphoenolpyruvate: step 7/7. Catalyzes the anti-1,4-elimination of the C-3 phosphate and the C-6 proR hydrogen from 5-enolpyruvylshikimate-3-phosphate (EPSP) to yield chorismate, which is the branch point compound that serves as the starting substrate for the three terminal pathways of aromatic amino acid biosynthesis. This reaction introduces a second double bond into the aromatic ring system. The chain is Chorismate synthase from Bordetella avium (strain 197N).